Reading from the N-terminus, the 590-residue chain is Histone-binding protein N1/N2 (590 aa).

The segment at 1–30 is disordered; the sequence is MAEETAALSTEKTEDTSTAPSTSAEKADGI. Residues 36–69 form a TPR 1 repeat; sequence AKRLMGAGQKHLVMKDVRSAVNLFQEASSLLAKQ. Positions 102–328 are disordered; sequence ALEGMPEDDE…EKETEEEDVG (227 aa). The segment covering 106 to 120 has biased composition (acidic residues); the sequence is MPEDDEEEAEKEEDP. Composition is skewed to basic and acidic residues over residues 128–250 and 262–275; these read LDEK…DAKE and AEEK…ESKE. Over residues 293-327 the composition is skewed to acidic residues; it reads EKMEEEEEGEDSEENEDGTEENEGTEEKETEEEDV. TPR repeat units lie at residues 357-390 and 399-432; these read AQAH…QKEH and AETH…IEKR. A disordered region spans residues 492–590; that stretch reads GGSSGFSKEN…METATVESTA (99 aa). Positions 496–525 are enriched in polar residues; the sequence is GFSKENGSTSSSSAVEKSGDSTVPVTNCVS. Residues 531–537 carry the Nuclear localization signal motif; sequence VRKKRKT. Residues 536 to 553 are compositionally biased toward basic and acidic residues; it reads KTEEESPLKDKDAKKSKQ.

The protein belongs to the NASP family.

The protein resides in the nucleus. Its function is as follows. This protein is involved in nucleosome assembly. It is bound to H3 and H4 in the absence of DNA, but released from H3 and H4 in the presence of DNA. The polypeptide is Histone-binding protein N1/N2 (Xenopus laevis (African clawed frog)).